Here is a 590-residue protein sequence, read N- to C-terminus: Arginine--tRNA ligase (590 aa).

A 'HIGH' region motif is present at residues 138–148 (ANPTGPLHIGH).

The protein belongs to the class-I aminoacyl-tRNA synthetase family. In terms of assembly, monomer.

It is found in the cytoplasm. It carries out the reaction tRNA(Arg) + L-arginine + ATP = L-arginyl-tRNA(Arg) + AMP + diphosphate. In Orientia tsutsugamushi (strain Boryong) (Rickettsia tsutsugamushi), this protein is Arginine--tRNA ligase.